Reading from the N-terminus, the 383-residue chain is uncharacterized protein (383 aa).

The next 10 membrane-spanning stretches (helical) occupy residues 25–45 (LWVALCIVIGIALGKLLPAVA), 53–73 (IYNVSIPIAICLFFMMYPIMV), 103–123 (FTMVIFAQFFLGYLFAPLLTA), 139–159 (IAGCILLGIAPCTAMVLMWGY), 166–186 (GLTLVMVAVNSLAMLFLYAPL), 200–220 (WQTIVLSVLIYVGLPLAAGIY), 238–258 (FLHYLSPIAIVALLLTLILLF), 272–292 (IFLIAVPLFIQTNFIFLITYV), 309–329 (LIGASNHFEVAIATAVMLFGL), and 332–352 (GAALATVVGVLIEVPVMLMLV).

This sequence belongs to the arsenical resistance-3 (ACR3) (TC 2.A.59) family.

The protein localises to the cell membrane. This is an uncharacterized protein from Synechocystis sp. (strain ATCC 27184 / PCC 6803 / Kazusa).